Here is an 899-residue protein sequence, read N- to C-terminus: Solute carrier family 12 member 9 (899 aa).

Residues 1 to 42 are Cytoplasmic-facing; it reads MANEHSPLLVHGVYSMMGNAEDSRGGSAGTGEASNPKTDPRK. The helical transmembrane segment at 43 to 63 threads the bilayer; the sequence is LNTFFGVMVPTILSMFSIVLF. Residues 64–78 lie on the Extracellular side of the membrane; that stretch reads LRTGFVVGHAGLLHG. Residues 79 to 99 form a helical membrane-spanning segment; it reads LLMLFVAYFIISLTILSICAI. Over 100–125 the chain is Cytoplasmic; that stretch reads STNGAVEGGGAYFMISRSLGPEFGGS. The helical transmembrane segment at 126–146 threads the bilayer; the sequence is IGLMFYLAKVCACGVYVLGLV. Residues 147 to 175 lie on the Extracellular side of the membrane; the sequence is EAIMDVFGQDPGSSVAQGLRVLPQGYWYT. Residues 176–196 form a helical membrane-spanning segment; the sequence is VLYSSVVLLLCMLVCLVGAHI. Residues 197-201 lie on the Cytoplasmic side of the membrane; it reads YAKAS. A helical transmembrane segment spans residues 202–222; that stretch reads FLILLVVTVSLISIIISPLIV. Residues 223 to 269 are Extracellular-facing; that stretch reads SPQGFNITHTYGNNHSVTVSPSYTGFNSTTLKNNLGPRYSLDYSTNT. N-linked (GlcNAc...) asparagine glycosylation is found at N228, N236, and N249. Residues 270–290 traverse the membrane as a helical segment; that stretch reads MMSFATVFAVMFTSCTGIMAG. Topologically, residues 291–306 are cytoplasmic; it reads ANMSGELKNPSESIPK. Residues 307 to 327 form a helical membrane-spanning segment; that stretch reads GTIMAVAYTFTVYVLLYLLLS. The Extracellular portion of the chain corresponds to 328–350; sequence STCDRSLLLNDYAVFQRVNVWPP. The helical transmembrane segment at 351–371 threads the bilayer; sequence FVTIGVYCASLSAAMCSMIGA. Topologically, residues 372–373 are cytoplasmic; it reads SR. The helical transmembrane segment at 374–394 threads the bilayer; sequence ILHALALDQLFGLPLAPAAVT. Topologically, residues 395 to 399 are extracellular; it reads SSSGN. Residues 400–420 form a helical membrane-spanning segment; that stretch reads PWVSVLYTWALVQCTLFAGQL. N421 is a topological domain (cytoplasmic). Residues 422–442 traverse the membrane as a helical segment; sequence VIAGIVTVFYLLAYAAVDLAC. Topologically, residues 443–455 are extracellular; the sequence is LALEWASAPNFRP. A helical membrane pass occupies residues 456-476; sequence TFQFFSWHTCLLGIISCVVMM. Over 477 to 487 the chain is Extracellular; that stretch reads FVINPVYSSAS. Residues 488–510 form a helical membrane-spanning segment; sequence IVLLLLLLLFLHYRSPTSSWGYI. The Cytoplasmic segment spans residues 511–563; that stretch reads SQALIFHQVRKYLLMLDSRKDHVKFWRPQVLLMVSNPRSSCQLICFVNQLKKG. The chain crosses the membrane as a helical span at residues 564-584; it reads GLFVLGHVQIGDLDVLPADPV. Topologically, residues 585–749 are extracellular; that stretch reads QPQYNFWLSL…NLLTPGSASY (165 aa). Residues 750–770 traverse the membrane as a helical segment; sequence ADVGSLFLLQMACVLNMASGW. The Cytoplasmic portion of the chain corresponds to 771–899; the sequence is RRARLRIFVC…GVTPVTCTEL (129 aa).

The protein belongs to the SLC12A transporter family.

It is found in the cell membrane. It localises to the lysosome membrane. Seems to correspond to a subunit of a multimeric transport system and thus, additional subunits may be required for its function. May play a role in lysosomal ion flux and osmoregulation. In Danio rerio (Zebrafish), this protein is Solute carrier family 12 member 9 (slc12a9).